A 154-amino-acid chain; its full sequence is Transcription antitermination protein NusB (154 aa).

This sequence belongs to the NusB family.

Functionally, involved in transcription antitermination. Required for transcription of ribosomal RNA (rRNA) genes. Binds specifically to the boxA antiterminator sequence of the ribosomal RNA (rrn) operons. This is Transcription antitermination protein NusB from Oleidesulfovibrio alaskensis (strain ATCC BAA-1058 / DSM 17464 / G20) (Desulfovibrio alaskensis).